Reading from the N-terminus, the 472-residue chain is MQVASATPAATVRKAAAGDELSEFFALTPDLLEVANASGNASLQLQDLWWELGLELPDGAAPGHPPGGGGAESTDTEARVRILISAVYWVVCALGLAGNLLVLYLMKSKQGWRKSSINLFVTNLALTDFQFVLTLPFWAVENALDFKWPFGKAMCKIVSMVTSMNMYASVFFLTAMSVARYHSVASALKSHRTRGRGRGDCCGQSLRESCCFSAKVLCGLIWASAALASLPNAIFSTTIRVLGEELCLMHFPDKLLGWDRQFWLGLYHLQKVLLGFLLPLSIISLCYLLLVRFISDRRVVGTTDAVGAAAAPGGGLSTASARRRSKVTKSVTIVVLSFFLCWLPNQALTTWSILIKFNAVPFSQEYFQCQVYAFPVSVCLAHSNSCLNPILYCLVRREFRKALKNLLWRIASPSLTNMRPFTATTKPEPEDHGLQALAPLNAAAEPDLIYYPPGVVVYSGGRYDLLPSSSAY.

Residues 1–81 lie on the Extracellular side of the membrane; it reads MQVASATPAA…ESTDTEARVR (81 aa). Residues asparagine 36 and asparagine 40 are each glycosylated (N-linked (GlcNAc...) asparagine). A helical membrane pass occupies residues 82-102; sequence ILISAVYWVVCALGLAGNLLV. Over 103 to 119 the chain is Cytoplasmic; it reads LYLMKSKQGWRKSSINL. The chain crosses the membrane as a helical span at residues 120–140; that stretch reads FVTNLALTDFQFVLTLPFWAV. At 141-156 the chain is on the extracellular side; the sequence is ENALDFKWPFGKAMCK. Cysteine 155 and cysteine 247 are disulfide-bonded. A helical transmembrane segment spans residues 157–177; sequence IVSMVTSMNMYASVFFLTAMS. Residues 178-215 lie on the Cytoplasmic side of the membrane; it reads VARYHSVASALKSHRTRGRGRGDCCGQSLRESCCFSAK. The helical transmembrane segment at 216–236 threads the bilayer; it reads VLCGLIWASAALASLPNAIFS. Residues 237 to 270 lie on the Extracellular side of the membrane; the sequence is TTIRVLGEELCLMHFPDKLLGWDRQFWLGLYHLQ. The chain crosses the membrane as a helical span at residues 271–291; sequence KVLLGFLLPLSIISLCYLLLV. Residues 292 to 298 lie on the Cytoplasmic side of the membrane; that stretch reads RFISDRR. The chain crosses the membrane as a helical span at residues 299 to 319; that stretch reads VVGTTDAVGAAAAPGGGLSTA. Residues 320–332 lie on the Extracellular side of the membrane; the sequence is SARRRSKVTKSVT. Residues 333–353 traverse the membrane as a helical segment; sequence IVVLSFFLCWLPNQALTTWSI. Over 354 to 472 the chain is Cytoplasmic; it reads LIKFNAVPFS…YDLLPSSSAY (119 aa).

This sequence belongs to the G-protein coupled receptor 1 family.

It is found in the cell membrane. Receptor for RNL3/relaxin-3. Binding of the ligand inhibit cAMP accumulation. This Mus musculus (Mouse) protein is Relaxin-3 receptor 1 (Rxfp3).